We begin with the raw amino-acid sequence, 185 residues long: Ribosome-recycling factor (185 aa).

Belongs to the RRF family.

It localises to the cytoplasm. Functionally, responsible for the release of ribosomes from messenger RNA at the termination of protein biosynthesis. May increase the efficiency of translation by recycling ribosomes from one round of translation to another. The polypeptide is Ribosome-recycling factor (Campylobacter jejuni subsp. doylei (strain ATCC BAA-1458 / RM4099 / 269.97)).